The sequence spans 642 residues: Regulator of MON1-CCZ1 complex (642 aa).

The 155-residue stretch at 462–616 (RPYTESILML…KLYETLSFPK (155 aa)) folds into the Mic1 domain.

It belongs to the RMC1 family. Component of the Mon1-Ccz1 guanyl-nucleotide exchange factor complex made up of Mon1, Ccz1 and Bulli; the interaction of Bulli with the Mon1-Ccz1 heterodimer is mediated via the C-terminal Mic1 domain of Bulli. Mon1 and Ccz1 form a stable complex which displays Rab7 GEF activity with or without Bulli; GEF activity is enhanced by Bulli possibly by improving membrane association of the complex.

Its subcellular location is the late endosome. Positive regulator of the Rab7 guanyl-nucleotide exchange activity of the Mon1-Ccz1 complex, possibly by enhancing its endosomal membrane association. As part of the Mon1-Ccz1 complex involved in endolysosomal biogenesis possibly by mediating Rab conversion, the replacement of Rab5 with Rab7 during late endosome maturation. The protein is Regulator of MON1-CCZ1 complex of Drosophila melanogaster (Fruit fly).